Reading from the N-terminus, the 315-residue chain is Probable cell division protein WhiA (315 aa).

Positions 275 to 309 form a DNA-binding region, H-T-H motif; it reads TLKELGEMVSSGTVSKSGVNHRLRKIDEIADALRR.

This sequence belongs to the WhiA family.

Involved in cell division and chromosome segregation. This Lysinibacillus sphaericus (strain C3-41) protein is Probable cell division protein WhiA.